Here is a 361-residue protein sequence, read N- to C-terminus: D-alanine--D-alanine ligase (361 aa).

One can recognise an ATP-grasp domain in the interval 134 to 344 (KILAQRAGVP…YTDLITKLID (211 aa)). Residue 169-224 (ASQLGSDLFVKPSNQGSSVGVSHVTNEKEYKVALAEAFKYDDKVLVEETVHGTEVE) coordinates ATP. Aspartate 297, glutamate 311, and asparagine 313 together coordinate Mg(2+).

The protein belongs to the D-alanine--D-alanine ligase family. It depends on Mg(2+) as a cofactor. Mn(2+) is required as a cofactor.

The protein resides in the cytoplasm. The catalysed reaction is 2 D-alanine + ATP = D-alanyl-D-alanine + ADP + phosphate + H(+). It functions in the pathway cell wall biogenesis; peptidoglycan biosynthesis. Its function is as follows. Cell wall formation. The protein is D-alanine--D-alanine ligase of Lactobacillus johnsonii (strain CNCM I-12250 / La1 / NCC 533).